A 60-amino-acid polypeptide reads, in one-letter code: Potassium channel toxin alpha-KTx 12.5 (60 aa).

The first 22 residues, 1–22, serve as a signal peptide directing secretion; that stretch reads MNKLPILIFMLLVCSMFISSDC. 3 disulfide bridges follow: cysteine 30-cysteine 51, cysteine 36-cysteine 56, and cysteine 40-cysteine 58.

The protein belongs to the short scorpion toxin superfamily. Potassium channel inhibitor family. Alpha-KTx 12 subfamily. Expressed by the venom gland.

It is found in the secreted. Its function is as follows. This recombinant toxin inhibits the mammalian voltage-gated potassium channels Kv1.3/KCNA3 (IC(50)=28 nM). Kv1.1/KCNA1 and Kv1.2/KCNA2 potassium channels are also weakly inhibited (IC(50)=1.73 uM and IC(50)=12.63 uM, respectively). The sequence is that of Potassium channel toxin alpha-KTx 12.5 from Lychas mucronatus (Chinese swimming scorpion).